The following is a 116-amino-acid chain: Vitelline membrane protein Vm32E (116 aa).

The N-terminal stretch at 1–17 (MQIVALTLVAFVAIAGA) is a signal peptide. Residues 36–73 (GYPAPPCPTNYLFSCQPNLAPAPCAQEAPAYGSAGAYT) form the VM domain.

Belongs to the vitelline membrane family. Sulfated by pip; may be involved in embryo dorsal-ventral axis determination. Sulfation by pip may occur on covalently bound glycosaminoglycans. In terms of tissue distribution, expressed in stage 10 egg-chambers, localized in the outer eggshell (chorion membrane).

Its subcellular location is the secreted. Its function is as follows. Major early eggshell protein. The protein is Vitelline membrane protein Vm32E of Drosophila melanogaster (Fruit fly).